An 84-amino-acid chain; its full sequence is Replication regulatory protein repA2 (84 aa).

The segment covering M1–G13 has biased composition (polar residues). Residues M1 to R31 are disordered.

This protein is involved in the determination of copy number in gene replication. It binds to the repA promoter thus inhibiting the synthesis of the mRNA for the initiator protein repA. This is Replication regulatory protein repA2 (repA2) from Escherichia coli O157:H7.